We begin with the raw amino-acid sequence, 119 residues long: Large ribosomal subunit protein bL19 (119 aa).

It belongs to the bacterial ribosomal protein bL19 family.

In terms of biological role, this protein is located at the 30S-50S ribosomal subunit interface and may play a role in the structure and function of the aminoacyl-tRNA binding site. The protein is Large ribosomal subunit protein bL19 (rplS) of Mycoplasma genitalium (strain ATCC 33530 / DSM 19775 / NCTC 10195 / G37) (Mycoplasmoides genitalium).